The chain runs to 162 residues: Ribonuclease (162 aa).

An N-terminal signal peptide occupies residues 1–29 (MKKISSVFTMFALIAAILFSGFIPQQAYA). The propeptide occupies 30–53 (ETTLTPTATNKTASIQLTSDVHTL). Glu-125 serves as the catalytic Proton acceptor. Catalysis depends on His-154, which acts as the Proton donor.

It belongs to the ribonuclease N1/T1 family.

The protein resides in the secreted. Functionally, this is a purine-specific ribonuclease. The polypeptide is Ribonuclease (Bacillus pumilus (Bacillus mesentericus)).